A 93-amino-acid chain; its full sequence is Pyrimidine/purine nucleoside phosphorylase (93 aa).

This sequence belongs to the nucleoside phosphorylase PpnP family.

It carries out the reaction a purine D-ribonucleoside + phosphate = a purine nucleobase + alpha-D-ribose 1-phosphate. The catalysed reaction is adenosine + phosphate = alpha-D-ribose 1-phosphate + adenine. The enzyme catalyses cytidine + phosphate = cytosine + alpha-D-ribose 1-phosphate. It catalyses the reaction guanosine + phosphate = alpha-D-ribose 1-phosphate + guanine. It carries out the reaction inosine + phosphate = alpha-D-ribose 1-phosphate + hypoxanthine. The catalysed reaction is thymidine + phosphate = 2-deoxy-alpha-D-ribose 1-phosphate + thymine. The enzyme catalyses uridine + phosphate = alpha-D-ribose 1-phosphate + uracil. It catalyses the reaction xanthosine + phosphate = alpha-D-ribose 1-phosphate + xanthine. Catalyzes the phosphorolysis of diverse nucleosides, yielding D-ribose 1-phosphate and the respective free bases. Can use uridine, adenosine, guanosine, cytidine, thymidine, inosine and xanthosine as substrates. Also catalyzes the reverse reactions. This is Pyrimidine/purine nucleoside phosphorylase from Vibrio vulnificus (strain CMCP6).